Consider the following 135-residue polypeptide: Mediator of RNA polymerase II transcription subunit 10 (135 aa).

The protein belongs to the Mediator complex subunit 10 family. Component of the Mediator complex.

The protein resides in the nucleus. Its function is as follows. Component of the Mediator complex, a coactivator involved in the regulated transcription of nearly all RNA polymerase II-dependent genes. Mediator functions as a bridge to convey information from gene-specific regulatory proteins to the basal RNA polymerase II transcription machinery. Mediator is recruited to promoters by direct interactions with regulatory proteins and serves as a scaffold for the assembly of a functional preinitiation complex with RNA polymerase II and the general transcription factors. This is Mediator of RNA polymerase II transcription subunit 10 (med10) from Xenopus tropicalis (Western clawed frog).